We begin with the raw amino-acid sequence, 1047 residues long: Ribonucleoside-diphosphate reductase subunit alpha (1047 aa).

ATP-cone domains follow at residues 9 to 111, 118 to 219, and 237 to 327; these read CTIV…KAHR, LSVV…ARVR, and VEVL…EALG. Substrate-binding positions include Thr-442, 457–458, Gly-486, 670–674, and 857–861; these read SC, NLCTE, and PTATI. A disulfide bridge links Cys-458 with Cys-687. Catalysis depends on Asn-670, which acts as the Proton acceptor. Cys-672 (cysteine radical intermediate) is an active-site residue. The active-site Proton acceptor is Glu-674.

This sequence belongs to the ribonucleoside diphosphate reductase large chain family. In terms of assembly, tetramer of two alpha and two beta subunits.

The enzyme catalyses a 2'-deoxyribonucleoside 5'-diphosphate + [thioredoxin]-disulfide + H2O = a ribonucleoside 5'-diphosphate + [thioredoxin]-dithiol. Its activity is regulated as follows. Under complex allosteric control mediated by deoxynucleoside triphosphates and ATP binding. The type of nucleotide bound at the specificity site determines substrate preference. It seems probable that ATP makes the enzyme reduce CDP and UDP, dGTP favors ADP reduction and dTTP favors GDP reduction. Its function is as follows. Provides the precursors necessary for DNA synthesis. Catalyzes the biosynthesis of deoxyribonucleotides from the corresponding ribonucleotides. This Chlamydia trachomatis serovar D (strain ATCC VR-885 / DSM 19411 / UW-3/Cx) protein is Ribonucleoside-diphosphate reductase subunit alpha (nrdA).